The chain runs to 214 residues: MTNGQKIEVAVQLPESKVAATENNETMSGPLVVGGGVAKPFGRKADVMHVILRLLCTITSVTAVSFMVTAHQSSTVSIYGFMLPVRSKWSFSHSFEYLVGVSAAVAAHSLLQLLISMSRLLRKSPVIPSRSHAWLIFAGDQVFAYAMISAGAAASGVTNLNRTGIQHTALPNFCKPLNYFCNHVAVSIAFAFISCLLLAALAVQEVIWLSKSKY.

Over 1-49 (MTNGQKIEVAVQLPESKVAATENNETMSGPLVVGGGVAKPFGRKADVMH) the chain is Cytoplasmic. Residues 50 to 70 (VILRLLCTITSVTAVSFMVTA) traverse the membrane as a helical segment. Residues 71-96 (HQSSTVSIYGFMLPVRSKWSFSHSFE) lie on the Extracellular side of the membrane. Residues 97–117 (YLVGVSAAVAAHSLLQLLISM) traverse the membrane as a helical segment. Residues 118-132 (SRLLRKSPVIPSRSH) lie on the Cytoplasmic side of the membrane. Residues 133–153 (AWLIFAGDQVFAYAMISAGAA) traverse the membrane as a helical segment. Residues 154-182 (ASGVTNLNRTGIQHTALPNFCKPLNYFCN) lie on the Extracellular side of the membrane. N-linked (GlcNAc...) asparagine glycosylation occurs at Asn161. The chain crosses the membrane as a helical span at residues 183-203 (HVAVSIAFAFISCLLLAALAV). The Cytoplasmic portion of the chain corresponds to 204–214 (QEVIWLSKSKY).

The protein belongs to the Casparian strip membrane proteins (CASP) family. As to quaternary structure, homodimer and heterodimers.

It localises to the cell membrane. The chain is CASP-like protein 3A1 from Ricinus communis (Castor bean).